A 452-amino-acid polypeptide reads, in one-letter code: uncharacterized protein (452 aa).

The protein localises to the cytoplasm. The protein resides in the nucleus. This is an uncharacterized protein from Schizosaccharomyces pombe (strain 972 / ATCC 24843) (Fission yeast).